The following is a 473-amino-acid chain: Alliin lyase 2 (473 aa).

A signal peptide spans 1–15 (MICLVILTCIIMSNS). Residues 16–25 (FVNNNNMVQA) constitute a propeptide that is removed on maturation. In terms of domain architecture, EGF-like; atypical spans 38-84 (EAVANINCSEHGRAFLDGIISEGSPKCECNTCYTGPDCSEKIQGCSA). Asparagine 44 carries an N-linked (GlcNAc...) asparagine glycan. 3 cysteine pairs are disulfide-bonded: cysteine 45–cysteine 64, cysteine 66–cysteine 75, and cysteine 69–cysteine 82. 117–125 (YFFNPVSNF) is a chloride binding site. Residues asparagine 171 and asparagine 216 are each glycosylated (N-linked (GlcNAc...) asparagine). An N6-(pyridoxal phosphate)lysine modification is found at lysine 276. Asparagine 353 is a glycosylation site (N-linked (GlcNAc...) asparagine). Cysteine 393 and cysteine 401 form a disulfide bridge.

Belongs to the alliinase family. Homodimer. Pyridoxal 5'-phosphate serves as cofactor. Glycosylated. As to expression, high expression in bulbs, lower expression in leaves, and no expression in roots.

The protein localises to the vacuole. The catalysed reaction is an S-alkyl-L-cysteine S-oxide = an S-alkyl sulfenate + 2-aminoprop-2-enoate. The enzyme catalyses alliin = allylsulfenate + 2-aminoprop-2-enoate. Its function is as follows. Able to cleave the C-S bond of sulfoxide derivatives of Cys to produce allicin, thus giving rise to all sulfur compounds which are responsible for most of the properties of garlic, such as the specific smell and flavor as well as the health benefits like blood lipid or blood pressure lowering. The polypeptide is Alliin lyase 2 (Allium sativum (Garlic)).